Reading from the N-terminus, the 683-residue chain is MTHPDRSAHDLNVPIQHSGRWFQDNLGRTLLLRGINVCGSSKLPTRPYPGSTHLYDDILFWDHRNVSFVNRPFPLEDAHEHFSRLSAWGLTLIRLLVPWESIEHEGPGCYDEEYIDYLRQLIEMMPRYGIKCIIDPHQDTWSRFSGGSGAPGWTFEVAGLNIKHFKETGAAYVHNTNAVPGDPLPMVWPTNYTKLASCTMFTLFFAGDTFAPHRTYQSQSIQQFLNHHFIEAYRHLAERLSDLEAVLAFEFMNEPHPGYIGLDHLDSFDPIMNLLFGDSPTPLQSFALGDGIPQTVDVYIKSWPFPTKKSHDRVINASQTSAWFSGCVWKEHGVWTVDDQGVPRLVNTHYFSKHPKTGEKISFYEDFYKPLVNRYVAAIQSVKKEYYCLVEPLANEKPPVYNEHDHHHNVIFSPHWYDLDSVFYKKFNARMTHDVQCLQRGGNVFSATYFGKRGAKKNYRGQIKNIKEDGLLNMGEKPCIMGEVGIPMDLNNKMAFEDDNYENHVHFMDAIIYALETNLISFTLWNYDVFNDHEYGDHWNGENFSIYSVKKSEEDYMRHDDGNSKLSKKHLYDGGRVLEAVLRPYAAKVAGTPVSAEFNIDTLQYTFSFIPDCKGSTTTEIFVPYFHYGNKTIKTDVSFGRCSYIEEFQTLYHQYELNDPLPKLVTITMGILTTESANSCSVM.

The active-site Proton donor is E254. The active-site Nucleophile is the E483.

Belongs to the glycosyl hydrolase 5 (cellulase A) family.

It is found in the membrane. The enzyme catalyses a beta-D-glucosyl-(1&lt;-&gt;1')-N-acylsphing-4-enine + H2O = an N-acylsphing-4-enine + D-glucose. Its activity is regulated as follows. Inhibited by metal cations Co(2+), Cu(2+), Ni(2+), Pb(2+) and Zn(2+). Not inhibited by metal chelator ethylenediaminetetraacetic acid (EDTA). Its function is as follows. Specifically hydrolyzes the glucosidic linkage in glucosylceramide. May prevent accumulation of aberrent glucosylceramide containing immature ceramide. In Rhizopus delemar (strain RA 99-880 / ATCC MYA-4621 / FGSC 9543 / NRRL 43880) (Mucormycosis agent), this protein is Glucosylceramidase.